The sequence spans 465 residues: Argininosuccinate lyase (465 aa).

It belongs to the lyase 1 family. Argininosuccinate lyase subfamily.

Its subcellular location is the cytoplasm. The enzyme catalyses 2-(N(omega)-L-arginino)succinate = fumarate + L-arginine. It functions in the pathway amino-acid biosynthesis; L-arginine biosynthesis; L-arginine from L-ornithine and carbamoyl phosphate: step 3/3. This is Argininosuccinate lyase from Clostridium botulinum (strain Alaska E43 / Type E3).